We begin with the raw amino-acid sequence, 171 residues long: Skp-like protein (171 aa).

An N-terminal signal peptide occupies residues 1-21 (MKKLLFSTFLLVLGSTSAAHA).

Belongs to the Skp family.

The chain is Skp-like protein from Chlamydia pneumoniae (Chlamydophila pneumoniae).